The chain runs to 325 residues: Casein kinase I isoform alpha (325 aa).

A2 carries the post-translational modification N-acetylalanine. At S4 the chain carries Phosphoserine. N6-acetyllysine is present on K8. One can recognise a Protein kinase domain in the interval Y17 to F285. ATP contacts are provided by residues I23 to I31 and K46. D136 acts as the Proton acceptor in catalysis. At I156 the chain carries Phosphoserine.

It belongs to the protein kinase superfamily. CK1 Ser/Thr protein kinase family. Casein kinase I subfamily. As to quaternary structure, interacts with the Axin complex. Interacts with TUT1, leading to TUT1 phosphorylation. Interacts with FAM83A, FAM83B, FAM83C, FAM83D, FAM83E, FAM83F, FAM83G and FAM83H (via DUF1669). Interaction with FAM83H recruits CSNK1A1 to keratin filaments. Post-translationally, phosphorylated by MTOR in response to mitogenic stimulation, leading to its activation.

It is found in the cytoplasm. Its subcellular location is the cytoskeleton. The protein localises to the microtubule organizing center. The protein resides in the centrosome. It localises to the chromosome. It is found in the centromere. Its subcellular location is the kinetochore. The protein localises to the nucleus speckle. The protein resides in the cilium basal body. It localises to the spindle. It catalyses the reaction L-seryl-[protein] + ATP = O-phospho-L-seryl-[protein] + ADP + H(+). The enzyme catalyses L-threonyl-[protein] + ATP = O-phospho-L-threonyl-[protein] + ADP + H(+). In terms of biological role, casein kinases are operationally defined by their preferential utilization of acidic proteins such as caseins as substrates. Can phosphorylate a large number of proteins. Participates in Wnt signaling. Phosphorylates CTNNB1 at 'Ser-45'. May phosphorylate PER1 and PER2. May play a role in segregating chromosomes during mitosis. May play a role in keratin cytoskeleton disassembly and thereby, it may regulate epithelial cell migration. Acts as a positive regulator of mTORC1 and mTORC2 signaling in response to nutrients by mediating phosphorylation of DEPTOR inhibitor. Acts as an inhibitor of NLRP3 inflammasome assembly by mediating phosphorylation of NLRP3. This is Casein kinase I isoform alpha (Csnk1a1) from Rattus norvegicus (Rat).